The primary structure comprises 428 residues: Tyrosine--tRNA ligase (428 aa).

Tyr41 serves as a coordination point for L-tyrosine. The 'HIGH' region motif lies at 46–55 (PTADSLHLGH). L-tyrosine contacts are provided by Tyr179 and Gln183. Positions 239–243 (KFGKT) match the 'KMSKS' region motif. An ATP-binding site is contributed by Lys242. Positions 361-418 (ADLMQALVDSELQPSRGQARKTIASNAITINGEKQSDPEYTFSDSDRLFGRYTLLRRG) constitute an S4 RNA-binding domain.

It belongs to the class-I aminoacyl-tRNA synthetase family. TyrS type 1 subfamily. Homodimer.

It localises to the cytoplasm. The enzyme catalyses tRNA(Tyr) + L-tyrosine + ATP = L-tyrosyl-tRNA(Tyr) + AMP + diphosphate + H(+). Catalyzes the attachment of tyrosine to tRNA(Tyr) in a two-step reaction: tyrosine is first activated by ATP to form Tyr-AMP and then transferred to the acceptor end of tRNA(Tyr). The protein is Tyrosine--tRNA ligase of Cronobacter sakazakii (strain ATCC BAA-894) (Enterobacter sakazakii).